The chain runs to 308 residues: Pseudouridine-5'-phosphate glycosidase (308 aa).

The active-site Proton donor is the E26. Residues K87 and V107 each contribute to the substrate site. Residue D139 coordinates Mn(2+). 141–143 (SAD) is a binding site for substrate. K160 functions as the Nucleophile in the catalytic mechanism.

Belongs to the pseudouridine-5'-phosphate glycosidase family. In terms of assembly, homotrimer. The cofactor is Mn(2+).

The enzyme catalyses D-ribose 5-phosphate + uracil = psi-UMP + H2O. In terms of biological role, catalyzes the reversible cleavage of pseudouridine 5'-phosphate (PsiMP) to ribose 5-phosphate and uracil. Functions biologically in the cleavage direction, as part of a pseudouridine degradation pathway. The protein is Pseudouridine-5'-phosphate glycosidase of Legionella pneumophila subsp. pneumophila (strain Philadelphia 1 / ATCC 33152 / DSM 7513).